Here is a 104-residue protein sequence, read N- to C-terminus: Co-chaperonin GroES 2 (104 aa).

The protein belongs to the GroES chaperonin family. As to quaternary structure, heptamer of 7 subunits arranged in a ring. Interacts with the chaperonin GroEL.

The protein resides in the cytoplasm. Its function is as follows. Together with the chaperonin GroEL, plays an essential role in assisting protein folding. The GroEL-GroES system forms a nano-cage that allows encapsulation of the non-native substrate proteins and provides a physical environment optimized to promote and accelerate protein folding. GroES binds to the apical surface of the GroEL ring, thereby capping the opening of the GroEL channel. This chain is Co-chaperonin GroES 2, found in Bradyrhizobium diazoefficiens (strain JCM 10833 / BCRC 13528 / IAM 13628 / NBRC 14792 / USDA 110).